Reading from the N-terminus, the 375-residue chain is Queuine tRNA-ribosyltransferase (375 aa).

Aspartate 90 (proton acceptor) is an active-site residue. Residues 90-94, aspartate 144, glutamine 190, and glycine 217 each bind substrate; that span reads DSGGF. The RNA binding stretch occupies residues 248–254; the sequence is GIGTPHY. Aspartate 267 serves as the catalytic Nucleophile. The segment at 272-276 is RNA binding; important for wobble base 34 recognition; that stretch reads TRIAR. Zn(2+) is bound by residues cysteine 305, cysteine 307, cysteine 310, and histidine 336.

It belongs to the queuine tRNA-ribosyltransferase family. Homodimer. Within each dimer, one monomer is responsible for RNA recognition and catalysis, while the other monomer binds to the replacement base PreQ1. Requires Zn(2+) as cofactor.

The enzyme catalyses 7-aminomethyl-7-carbaguanine + guanosine(34) in tRNA = 7-aminomethyl-7-carbaguanosine(34) in tRNA + guanine. It functions in the pathway tRNA modification; tRNA-queuosine biosynthesis. Its function is as follows. Catalyzes the base-exchange of a guanine (G) residue with the queuine precursor 7-aminomethyl-7-deazaguanine (PreQ1) at position 34 (anticodon wobble position) in tRNAs with GU(N) anticodons (tRNA-Asp, -Asn, -His and -Tyr). Catalysis occurs through a double-displacement mechanism. The nucleophile active site attacks the C1' of nucleotide 34 to detach the guanine base from the RNA, forming a covalent enzyme-RNA intermediate. The proton acceptor active site deprotonates the incoming PreQ1, allowing a nucleophilic attack on the C1' of the ribose to form the product. After dissociation, two additional enzymatic reactions on the tRNA convert PreQ1 to queuine (Q), resulting in the hypermodified nucleoside queuosine (7-(((4,5-cis-dihydroxy-2-cyclopenten-1-yl)amino)methyl)-7-deazaguanosine). This is Queuine tRNA-ribosyltransferase from Borrelia hermsii (strain HS1 / DAH).